Here is a 136-residue protein sequence, read N- to C-terminus: MACKRQTSLEKDKELVSSIVTAKSMIDRFFWSILSFLLTNLVFLFVAFLILIIYLISEITQQFAFAFIATIVFIIFYNILFLSYLLTMYIKGLKQIEQKSRYLLLVLDVKADELLPFSFLGSLRKSHMLEEMLLEQ.

Transmembrane regions (helical) follow at residues 36–56 and 63–83; these read FLLTNLVFLFVAFLILIIYLI and FAFAFIATIVFIIFYNILFLS.

It is found in the cell membrane. This is an uncharacterized protein from Mycoplasma pneumoniae (strain ATCC 29342 / M129 / Subtype 1) (Mycoplasmoides pneumoniae).